The primary structure comprises 444 residues: Beta-D-glucosyl crocetin beta-1,6-glucosyltransferase (444 aa).

Catalysis depends on H9, which acts as the Proton acceptor. An anthocyanidin is bound at residue H9. The active-site Charge relay is D108. T130, A319, Q321, H336, W339, N340, S341, E344, D360, and Q361 together coordinate UDP-alpha-D-glucose.

This sequence belongs to the UDP-glycosyltransferase family. As to expression, ubiquitous.

The enzyme catalyses beta-D-glucosyl crocetin + UDP-alpha-D-glucose = beta-D-gentiobiosyl crocetin + UDP + H(+). It carries out the reaction bis(beta-D-glucosyl) crocetin + UDP-alpha-D-glucose = beta-D-gentiobiosyl beta-D-glucosyl crocetin + UDP + H(+). The catalysed reaction is beta-D-gentiobiosyl beta-D-glucosyl crocetin + UDP-alpha-D-glucose = bis(beta-D-gentiobiosyl) crocetin + UDP + H(+). In terms of biological role, glucosyltransferase catalyzing the beta 1-6 glucosylation of the sugar moiety of crocetin glucosyl esters to produce crocetin gentiobiosyl esters. Weak activity toward curcumin glucosides, but no activity with flavonoid glucosides, coumarin glucosides, 4-nitrophenyl glucoside or crocetin. Involved with UGT75L6 in sequential glycosylation of crocetin to crocin (bis(beta-D-gentiobiosyl) crocetin). The polypeptide is Beta-D-glucosyl crocetin beta-1,6-glucosyltransferase (UGT94E5) (Gardenia jasminoides (Cape jasmine)).